The sequence spans 326 residues: Holliday junction branch migration complex subunit RuvB (326 aa).

The interval Met1 to Tyr180 is large ATPase domain (RuvB-L). ATP contacts are provided by residues Ile19, Arg20, Gly61, Lys64, Thr65, Thr66, Glu127–Phe129, Arg170, Tyr180, and Arg217. Thr65 contributes to the Mg(2+) binding site. Positions Ser181–Gly251 are small ATPAse domain (RuvB-S). Residues Lys254–Tyr326 are head domain (RuvB-H). Residues Arg307 and Arg312 each contribute to the DNA site.

This sequence belongs to the RuvB family. In terms of assembly, homohexamer. Forms an RuvA(8)-RuvB(12)-Holliday junction (HJ) complex. HJ DNA is sandwiched between 2 RuvA tetramers; dsDNA enters through RuvA and exits via RuvB. An RuvB hexamer assembles on each DNA strand where it exits the tetramer. Each RuvB hexamer is contacted by two RuvA subunits (via domain III) on 2 adjacent RuvB subunits; this complex drives branch migration. In the full resolvosome a probable DNA-RuvA(4)-RuvB(12)-RuvC(2) complex forms which resolves the HJ.

The protein resides in the cytoplasm. The catalysed reaction is ATP + H2O = ADP + phosphate + H(+). Its function is as follows. The RuvA-RuvB-RuvC complex processes Holliday junction (HJ) DNA during genetic recombination and DNA repair, while the RuvA-RuvB complex plays an important role in the rescue of blocked DNA replication forks via replication fork reversal (RFR). RuvA specifically binds to HJ cruciform DNA, conferring on it an open structure. The RuvB hexamer acts as an ATP-dependent pump, pulling dsDNA into and through the RuvAB complex. RuvB forms 2 homohexamers on either side of HJ DNA bound by 1 or 2 RuvA tetramers; 4 subunits per hexamer contact DNA at a time. Coordinated motions by a converter formed by DNA-disengaged RuvB subunits stimulates ATP hydrolysis and nucleotide exchange. Immobilization of the converter enables RuvB to convert the ATP-contained energy into a lever motion, pulling 2 nucleotides of DNA out of the RuvA tetramer per ATP hydrolyzed, thus driving DNA branch migration. The RuvB motors rotate together with the DNA substrate, which together with the progressing nucleotide cycle form the mechanistic basis for DNA recombination by continuous HJ branch migration. Branch migration allows RuvC to scan DNA until it finds its consensus sequence, where it cleaves and resolves cruciform DNA. In Wolbachia sp. subsp. Brugia malayi (strain TRS), this protein is Holliday junction branch migration complex subunit RuvB.